The chain runs to 453 residues: Ribosomal protein uS12 methylthiotransferase RimO (453 aa).

The MTTase N-terminal domain maps to 6–116 (PKVGFVSLGC…VMEAVHEALP (111 aa)). C15, C51, C80, C147, C151, and C154 together coordinate [4Fe-4S] cluster. The region spanning 133 to 370 (LTPRHYAYLK…MEKQAQISAA (238 aa)) is the Radical SAM core domain. The region spanning 373-441 (EAKIGTVQQC…DHDLYGDALP (69 aa)) is the TRAM domain.

It belongs to the methylthiotransferase family. RimO subfamily. [4Fe-4S] cluster serves as cofactor.

The protein resides in the cytoplasm. It carries out the reaction L-aspartate(89)-[ribosomal protein uS12]-hydrogen + (sulfur carrier)-SH + AH2 + 2 S-adenosyl-L-methionine = 3-methylsulfanyl-L-aspartate(89)-[ribosomal protein uS12]-hydrogen + (sulfur carrier)-H + 5'-deoxyadenosine + L-methionine + A + S-adenosyl-L-homocysteine + 2 H(+). Catalyzes the methylthiolation of an aspartic acid residue of ribosomal protein uS12. This is Ribosomal protein uS12 methylthiotransferase RimO from Stenotrophomonas maltophilia (strain R551-3).